A 181-amino-acid polypeptide reads, in one-letter code: Photosystem I assembly protein Ycf4 (181 aa).

The next 2 membrane-spanning stretches (helical) occupy residues tyrosine 19–phenylalanine 41 and leucine 61–tryptophan 83.

The protein belongs to the Ycf4 family.

The protein resides in the plastid. The protein localises to the chloroplast thylakoid membrane. Functionally, seems to be required for the assembly of the photosystem I complex. In Trieres chinensis (Marine centric diatom), this protein is Photosystem I assembly protein Ycf4.